Consider the following 185-residue polypeptide: Ribosome-recycling factor (185 aa).

This sequence belongs to the RRF family.

The protein localises to the cytoplasm. Its function is as follows. Responsible for the release of ribosomes from messenger RNA at the termination of protein biosynthesis. May increase the efficiency of translation by recycling ribosomes from one round of translation to another. In Legionella pneumophila (strain Corby), this protein is Ribosome-recycling factor.